The primary structure comprises 310 residues: MRFRGLDLNLLVALDALMTERKLTAAARRVKLSQPAMSAAIARLRTYFGDELFSMQGRELIPTPRAEALAPAVRDALLHIQLSVIAWDPINPAQSDRRFRIILSDFMTLVFFERVVERLAREAPGVSFELLPLDDDPYELLRRGDVDFLVLPDLFMSSAHPKAKLFAEALVCVGCPTNEQLLGELSFEKYMSMGHVAAQFGRALKPSFEQWLLLEHGFKRRVELVVPGFTLIPPLLPHTNRIAIIPLRLVKYFEQTIPLRIVKHPLPPLWFTEAVQWPALHNKDPGNIWMREILLQEASRSEFQGETSLE.

Residues 6-63 (LDLNLLVALDALMTERKLTAAARRVKLSQPAMSAAIARLRTYFGDELFSMQGRELIPT) form the HTH lysR-type domain. Positions 23–42 (LTAAARRVKLSQPAMSAAIA) form a DNA-binding region, H-T-H motif.

It belongs to the LysR transcriptional regulatory family.

In terms of biological role, nodD regulates the expression of the nodABCFE genes which encode other nodulation proteins. NodD is also a negative regulator of its own expression. Binds flavonoids as inducers. The chain is Nodulation protein D 2 (nodD2) from Rhizobium meliloti (strain 1021) (Ensifer meliloti).